A 148-amino-acid chain; its full sequence is Nucleoside diphosphate kinase A (148 aa).

Residues lysine 9, phenylalanine 57, arginine 85, threonine 91, arginine 102, and asparagine 112 each coordinate ATP. Catalysis depends on histidine 115, which acts as the Pros-phosphohistidine intermediate.

Belongs to the NDK family. Requires Mg(2+) as cofactor.

The catalysed reaction is a 2'-deoxyribonucleoside 5'-diphosphate + ATP = a 2'-deoxyribonucleoside 5'-triphosphate + ADP. It carries out the reaction a ribonucleoside 5'-diphosphate + ATP = a ribonucleoside 5'-triphosphate + ADP. Major role in the synthesis of nucleoside triphosphates other than ATP. The ATP gamma phosphate is transferred to the NDP beta phosphate via a ping-pong mechanism, using a phosphorylated active-site intermediate. This chain is Nucleoside diphosphate kinase A, found in Flaveria bidentis (Coastal plain yellowtops).